We begin with the raw amino-acid sequence, 183 residues long: Probable chemoreceptor glutamine deamidase CheD (183 aa).

This sequence belongs to the CheD family.

The catalysed reaction is L-glutaminyl-[protein] + H2O = L-glutamyl-[protein] + NH4(+). Its function is as follows. Probably deamidates glutamine residues to glutamate on methyl-accepting chemotaxis receptors (MCPs), playing an important role in chemotaxis. The protein is Probable chemoreceptor glutamine deamidase CheD of Zymomonas mobilis subsp. mobilis (strain ATCC 31821 / ZM4 / CP4).